A 127-amino-acid chain; its full sequence is Small ribosomal subunit protein uS13 (127 aa).

A disordered region spans residues 93 to 127; the sequence is RRSLPVRGQRTHTNARTRKGPRRGTVAGKKKATKT.

This sequence belongs to the universal ribosomal protein uS13 family. In terms of assembly, part of the 30S ribosomal subunit. Forms a loose heterodimer with protein S19. Forms two bridges to the 50S subunit in the 70S ribosome.

Its function is as follows. Located at the top of the head of the 30S subunit, it contacts several helices of the 16S rRNA. In the 70S ribosome it contacts the 23S rRNA (bridge B1a) and protein L5 of the 50S subunit (bridge B1b), connecting the 2 subunits; these bridges are implicated in subunit movement. Contacts the tRNAs in the A and P-sites. This Acidobacterium capsulatum (strain ATCC 51196 / DSM 11244 / BCRC 80197 / JCM 7670 / NBRC 15755 / NCIMB 13165 / 161) protein is Small ribosomal subunit protein uS13.